We begin with the raw amino-acid sequence, 699 residues long: Protein STRUBBELIG-RECEPTOR FAMILY 5 (699 aa).

The N-terminal stretch at 1 to 22 (MTQKLVRLVIVSLAITVTLLQA) is a signal peptide. Residues 23–273 (KTDNQEVSAL…DGGGITAGTG (251 aa)) are Extracellular-facing. LRR repeat units lie at residues 93-115 (SLTTFDLSKNNLKGNIPYQLPPN), 116-136 (IANLDFSENELDGNVPYSLSQ), 139-161 (NLQSINLGQNKLNGELPDMFQKL), 163-186 (KLETLDFSLNKLSGKLPQSFANLT), and 187-209 (SLKKLHLQDNRFTGDINVLRNLA). The N-linked (GlcNAc...) asparagine glycan is linked to Asn-184. The tract at residues 239-263 (NDWSTETAPPPPPGVKYGRKSSGSK) is disordered. A helical transmembrane segment spans residues 274-294 (MVIAGACLGVLVLIIVLIALV). Topologically, residues 295–699 (SKKKSSLSPH…SYRAHDDYDY (405 aa)) are cytoplasmic. A Phosphoserine modification is found at Ser-368. Positions 404-675 (FSPGNLLGEG…SEVVEALVRM (272 aa)) constitute a Protein kinase domain. ATP contacts are provided by residues 410–418 (LGEGSIGRV) and Lys-432.

Belongs to the protein kinase superfamily. Ser/Thr protein kinase family. As to expression, expressed in leaves and flowers.

It localises to the membrane. This chain is Protein STRUBBELIG-RECEPTOR FAMILY 5 (SRF5), found in Arabidopsis thaliana (Mouse-ear cress).